We begin with the raw amino-acid sequence, 46 residues long: Photosystem II reaction center protein K (46 aa).

Residues 1–9 (MLILFNTFA) constitute a propeptide that is removed on maturation. A helical membrane pass occupies residues 25–45 (LPLIPLFFFLLVFVWQAAVGF).

The protein belongs to the PsbK family. As to quaternary structure, PSII is composed of 1 copy each of membrane proteins PsbA, PsbB, PsbC, PsbD, PsbE, PsbF, PsbH, PsbI, PsbJ, PsbK, PsbL, PsbM, PsbT, PsbX, PsbY, Psb30/Ycf12, peripheral proteins PsbO, CyanoQ (PsbQ), PsbU, PsbV and a large number of cofactors. It forms dimeric complexes.

The protein localises to the cellular thylakoid membrane. One of the components of the core complex of photosystem II (PSII). PSII is a light-driven water:plastoquinone oxidoreductase that uses light energy to abstract electrons from H(2)O, generating O(2) and a proton gradient subsequently used for ATP formation. It consists of a core antenna complex that captures photons, and an electron transfer chain that converts photonic excitation into a charge separation. The sequence is that of Photosystem II reaction center protein K from Prochlorococcus marinus (strain MIT 9301).